A 276-amino-acid chain; its full sequence is Nickel import system permease protein NikC (276 aa).

The next 5 membrane-spanning stretches (helical) occupy residues 10–30, 73–93, 108–128, 186–206, and 238–258; these read LIFF…FFVS, LFVT…LGLF, FIDV…ASFF, IIPA…LYIS, and IMLI…NLTG. The 190-residue stretch at 69–258 folds into the ABC transmembrane type-1 domain; it reads ARSTLFVTVL…ITILIFNLTG (190 aa).

This sequence belongs to the binding-protein-dependent transport system permease family. OppBC subfamily. As to quaternary structure, the complex is composed of two ATP-binding proteins (NikD and NikE), two transmembrane proteins (NikB and NikC) and a solute-binding protein (NikA).

It is found in the cell membrane. Part of the ABC transporter complex NikABCDE (Opp2) involved in nickel import. Probably responsible for the translocation of the substrate across the membrane. In Staphylococcus aureus (strain Mu50 / ATCC 700699), this protein is Nickel import system permease protein NikC.